The following is a 191-amino-acid chain: Elongation factor P (191 aa).

The protein belongs to the elongation factor P family.

The protein localises to the cytoplasm. It participates in protein biosynthesis; polypeptide chain elongation. Functionally, involved in peptide bond synthesis. Stimulates efficient translation and peptide-bond synthesis on native or reconstituted 70S ribosomes in vitro. Probably functions indirectly by altering the affinity of the ribosome for aminoacyl-tRNA, thus increasing their reactivity as acceptors for peptidyl transferase. The protein is Elongation factor P of Janthinobacterium sp. (strain Marseille) (Minibacterium massiliensis).